The primary structure comprises 344 residues: Dihydroorotate dehydrogenase (quinone) (344 aa).

FMN is bound by residues 65 to 69 and threonine 89; that span reads AGFDK. Residue lysine 69 participates in substrate binding. 114 to 118 lines the substrate pocket; it reads NRMGF. The FMN site is built by asparagine 145 and asparagine 178. Asparagine 178 is a binding site for substrate. Serine 181 (nucleophile) is an active-site residue. Asparagine 183 lines the substrate pocket. FMN contacts are provided by lysine 215 and threonine 243. Substrate is bound at residue 244–245; it reads NT. FMN is bound by residues glycine 269, glycine 298, and 319 to 320; that span reads YT.

This sequence belongs to the dihydroorotate dehydrogenase family. Type 2 subfamily. In terms of assembly, monomer. It depends on FMN as a cofactor.

It is found in the cell membrane. It catalyses the reaction (S)-dihydroorotate + a quinone = orotate + a quinol. Its pathway is pyrimidine metabolism; UMP biosynthesis via de novo pathway; orotate from (S)-dihydroorotate (quinone route): step 1/1. Its function is as follows. Catalyzes the conversion of dihydroorotate to orotate with quinone as electron acceptor. The protein is Dihydroorotate dehydrogenase (quinone) of Clavibacter michiganensis subsp. michiganensis (strain NCPPB 382).